The following is a 62-amino-acid chain: Toxin Tb2-II (62 aa).

An LCN-type CS-alpha/beta domain is found at 1–62; the sequence is KEGYAMDHEG…KVWDYATNKC (62 aa). Disulfide bonds link Cys-11–Cys-62, Cys-15–Cys-38, Cys-23–Cys-43, and Cys-27–Cys-45.

It belongs to the long (4 C-C) scorpion toxin superfamily. Sodium channel inhibitor family. Beta subfamily. As to expression, expressed by the venom gland.

Its subcellular location is the secreted. Functionally, beta toxins bind voltage-independently at site-4 of sodium channels (Nav) and shift the voltage of activation toward more negative potentials thereby affecting sodium channel activation and promoting spontaneous and repetitive firing. This toxin is active against both mammals and insects. This chain is Toxin Tb2-II, found in Tityus bahiensis (Brazilian scorpion).